The chain runs to 197 residues: Large ribosomal subunit protein bL25 (197 aa).

This sequence belongs to the bacterial ribosomal protein bL25 family. CTC subfamily. Part of the 50S ribosomal subunit; part of the 5S rRNA/L5/L18/L25 subcomplex. Contacts the 5S rRNA. Binds to the 5S rRNA independently of L5 and L18.

Its function is as follows. This is one of the proteins that binds to the 5S RNA in the ribosome where it forms part of the central protuberance. This chain is Large ribosomal subunit protein bL25, found in Pseudomonas putida (strain ATCC 700007 / DSM 6899 / JCM 31910 / BCRC 17059 / LMG 24140 / F1).